Reading from the N-terminus, the 907-residue chain is Cytochrome b561, DM13 and DOMON domain-containing protein At5g54830 (907 aa).

An N-terminal signal peptide occupies residues 1-24; sequence MCDQRPNLLGSLVLLGFFIFFVNG. The 109-residue stretch at 31-139 folds into the DM13 domain; the sequence is SSLIGHESEF…ASDFGHVLLS (109 aa). The segment at 144 to 172 is disordered; the sequence is SDTSKAESPPSESNDVAPGKSNNSEPFKA. A compositionally biased stretch (polar residues) spans 153–168; it reads PSESNDVAPGKSNNSE. DOMON domains are found at residues 184–329 and 524–645; these read DKYR…WALG and QQVK…WAMG. Residues 653 to 850 form the Cytochrome b561 domain; the sequence is LTERNMHSVT…CVVTVAYLEY (198 aa). A helical membrane pass occupies residues 685–705; that stretch reads VLGVHGFMMFLAWGILLPGGI. Heme b is bound by residues His-689 and His-723. Transmembrane regions (helical) follow at residues 730–750, 754–774, 795–815, and 829–849; these read GLAI…GFSF, HVKF…NAWL, SHSI…FTGM, and GLNL…AYLE. Residues His-754 and His-796 each coordinate heme b. The segment covering 884–897 has biased composition (basic and acidic residues); sequence GGFRDKDDEDRNGG. A disordered region spans residues 884 to 907; the sequence is GGFRDKDDEDRNGGRMEIQLEPLK.

It depends on heme b as a cofactor.

The protein localises to the membrane. May act as a catecholamine-responsive trans-membrane electron transporter. The protein is Cytochrome b561, DM13 and DOMON domain-containing protein At5g54830 of Arabidopsis thaliana (Mouse-ear cress).